The chain runs to 389 residues: Phospho-N-acetylmuramoyl-pentapeptide-transferase (389 aa).

Transmembrane regions (helical) follow at residues tyrosine 21–glycine 41, threonine 71–alanine 91, phenylalanine 97–tyrosine 117, phenylalanine 134–alanine 154, tryptophan 167–phenylalanine 187, valine 190–threonine 210, glycine 222–valine 242, alanine 259–phenylalanine 279, valine 286–isoleucine 306, isoleucine 311–valine 331, and glutamine 366–leucine 386.

The protein belongs to the glycosyltransferase 4 family. MraY subfamily. Requires Mg(2+) as cofactor.

Its subcellular location is the cell inner membrane. The enzyme catalyses UDP-N-acetyl-alpha-D-muramoyl-L-alanyl-gamma-D-glutamyl-meso-2,6-diaminopimeloyl-D-alanyl-D-alanine + di-trans,octa-cis-undecaprenyl phosphate = di-trans,octa-cis-undecaprenyl diphospho-N-acetyl-alpha-D-muramoyl-L-alanyl-D-glutamyl-meso-2,6-diaminopimeloyl-D-alanyl-D-alanine + UMP. It functions in the pathway cell wall biogenesis; peptidoglycan biosynthesis. Catalyzes the initial step of the lipid cycle reactions in the biosynthesis of the cell wall peptidoglycan: transfers peptidoglycan precursor phospho-MurNAc-pentapeptide from UDP-MurNAc-pentapeptide onto the lipid carrier undecaprenyl phosphate, yielding undecaprenyl-pyrophosphoryl-MurNAc-pentapeptide, known as lipid I. This is Phospho-N-acetylmuramoyl-pentapeptide-transferase from Bordetella petrii (strain ATCC BAA-461 / DSM 12804 / CCUG 43448).